Consider the following 168-residue polypeptide: Peptide deformylase 1 (168 aa).

Residues C91 and H133 each contribute to the Fe cation site. Residue E134 is part of the active site. H137 provides a ligand contact to Fe cation.

Belongs to the polypeptide deformylase family. It depends on Fe(2+) as a cofactor.

The enzyme catalyses N-terminal N-formyl-L-methionyl-[peptide] + H2O = N-terminal L-methionyl-[peptide] + formate. In terms of biological role, removes the formyl group from the N-terminal Met of newly synthesized proteins. Requires at least a dipeptide for an efficient rate of reaction. N-terminal L-methionine is a prerequisite for activity but the enzyme has broad specificity at other positions. The sequence is that of Peptide deformylase 1 from Shewanella oneidensis (strain ATCC 700550 / JCM 31522 / CIP 106686 / LMG 19005 / NCIMB 14063 / MR-1).